The chain runs to 274 residues: Large ribosomal subunit protein uL2cz/uL2cy (274 aa).

Disordered stretches follow at residues 1-21 and 225-274; these read MAIHLYKTSTPGTRNGAVDSQ and PVDH…RRSK.

This sequence belongs to the universal ribosomal protein uL2 family. In terms of assembly, part of the 50S ribosomal subunit.

It localises to the plastid. It is found in the chloroplast. This is Large ribosomal subunit protein uL2cz/uL2cy (rpl2-A) from Gossypium barbadense (Sea Island cotton).